The chain runs to 70 residues: UPF0352 protein PSHAa1818 (70 aa).

Belongs to the UPF0352 family.

The polypeptide is UPF0352 protein PSHAa1818 (Pseudoalteromonas translucida (strain TAC 125)).